The chain runs to 269 residues: UPF0162 protein YchA (269 aa).

This sequence belongs to the UPF0162 family.

The polypeptide is UPF0162 protein YchA (ychA) (Escherichia coli O157:H7).